Here is a 396-residue protein sequence, read N- to C-terminus: L-cysteine desulfidase (396 aa).

C23 (proton acceptor) is an active-site residue. C287, C329, and C336 together coordinate [4Fe-4S] cluster.

The protein belongs to the L-cysteine desulfidase family. Homotrimer. It depends on [4Fe-4S] cluster as a cofactor.

It carries out the reaction L-cysteine + H2O = hydrogen sulfide + pyruvate + NH4(+) + H(+). In terms of biological role, catalyzes the cleavage of L-cysteine to form 2-aminoprop-2-enoate and sulfide. The former then spontaneously hydrolyzes to pyruvate and NH(3). May be responsible for the production of sulfide required for the biosynthesis of iron-sulfur centers in this archaea. This Methanococcus maripaludis (strain DSM 14266 / JCM 13030 / NBRC 101832 / S2 / LL) protein is L-cysteine desulfidase.